The following is a 122-amino-acid chain: Large ribosomal subunit protein uL14 (122 aa).

Belongs to the universal ribosomal protein uL14 family. Part of the 50S ribosomal subunit. Forms a cluster with proteins L3 and L19. In the 70S ribosome, L14 and L19 interact and together make contacts with the 16S rRNA in bridges B5 and B8.

Functionally, binds to 23S rRNA. Forms part of two intersubunit bridges in the 70S ribosome. The polypeptide is Large ribosomal subunit protein uL14 (Nitrobacter winogradskyi (strain ATCC 25391 / DSM 10237 / CIP 104748 / NCIMB 11846 / Nb-255)).